We begin with the raw amino-acid sequence, 449 residues long: MALDILAMAPLYQAPAINRIGPKTDPSKRPADPLKPLVLSRTKLTTIEAKRIMSILDEAIYKVELVTLLSYVASNREDMEGMLGEDVMRAVREHEDLCQVLLENVRCLKEKERQLQEQKEAEEEGWLRDRLLSIELQKSSLSPLMQQIKDSTKNVLRLLLSNPQAARLLQMQTQGRSAEAQNFIDSLIELRGFLFEKLLTSPMEARDKAQFLQDISRQNSNNQQIIDTLEKELAERMKNRNAEVEKENFVIQELKNHLHQVLKFSENSLVRTKQEAEKQQKADFRASQARVAKIQQEILQLQSQFYNLVMENREAEQALRKKKYKVETEIENWIQKYDTEMGEKQEELEDLDAVHREEKISLEELRRRHKVLVGEFAQIREEREINSKKRMEAEQEMVRMVRAATLIQALWKGYLVRSLLRSKKKRGKGKAKDKEKGKQKGKEKGKGKK.

A coiled-coil region spans residues 90 to 125 (AVREHEDLCQVLLENVRCLKEKERQLQEQKEAEEEG). Positions 400-429 (MVRAATLIQALWKGYLVRSLLRSKKKRGKG) constitute an IQ domain. Residues 422–449 (SKKKRGKGKAKDKEKGKQKGKEKGKGKK) form a disordered region. Residues 430 to 449 (KAKDKEKGKQKGKEKGKGKK) show a composition bias toward basic and acidic residues.

The protein belongs to the DRC10 family. As to quaternary structure, component of the nexin-dynein regulatory complex (N-DRC). Interacts with CFAP52.

It is found in the cytoplasm. The protein localises to the cytoskeleton. The protein resides in the flagellum axoneme. In terms of biological role, component of the nexin-dynein regulatory complex (N-DRC), a key regulator of ciliary/flagellar motility which maintains the alignment and integrity of the distal axoneme and regulates microtubule sliding in motile axonemes. In Homo sapiens (Human), this protein is Dynein regulatory complex protein 10 (IQCD).